The primary structure comprises 254 residues: Short-chain dehydrogenase srdF (254 aa).

Residues I18, S37, E67, N95, Y167, K171, V199, and T201 each contribute to the NADP(+) site. Y167 functions as the Proton donor in the catalytic mechanism. The active-site Lowers pKa of active site Tyr is the K171.

The protein belongs to the short-chain dehydrogenases/reductases (SDR) family.

In terms of biological role, short-chain dehydrogenase; part of the gene cluster that mediates the biosynthesis of sordarial, a salicylic aldehyde structurally related to the phytotoxin pyriculol. The most interesting aspect of this pathway is formation of an aromatic product from the highly reducing polyketide synthase srdA. SrdA synthesizes a reduced polyketide chain from one molecule of acetyl-CoA and five molecules of malonyl-CoA. The polyketide chain is then reductively released as an aldehyde. The oxidoreductases srdC, srdD and srdE then oxidize one of the hydroxy groups to facilitate the intramolecular aldol condensation, followed by dehydration to yield a salicylic aldehyde. This aldehyde can undergo facile reduction by endogenous reductases to yield the alcohol 1-hydroxy-2-hydroxymethyl-3-pent-1,3-dienylbenzene. The flavin-dependent srdI counteract against the propensity of the aldehydes to be reduced under physiological conditions and is responsible for reoxidizing 1-hydroxy-2-hydroxymethyl-3-pent-1,3-dienylbenzene back to the salicylic aldehyde. This salicylic aldehyde is then selectively epoxidized by the cupin-domain-containing oxidoreductase srdB to yield the epoxide, which can be hydrolyzed stereoselectively by the hydrolase srdG to give the final product sordarial. This chain is Short-chain dehydrogenase srdF, found in Neurospora crassa (strain ATCC 24698 / 74-OR23-1A / CBS 708.71 / DSM 1257 / FGSC 987).